The sequence spans 286 residues: ATP phosphoribosyltransferase (286 aa).

The protein belongs to the ATP phosphoribosyltransferase family. Long subfamily. Mg(2+) serves as cofactor.

It localises to the cytoplasm. The enzyme catalyses 1-(5-phospho-beta-D-ribosyl)-ATP + diphosphate = 5-phospho-alpha-D-ribose 1-diphosphate + ATP. It functions in the pathway amino-acid biosynthesis; L-histidine biosynthesis; L-histidine from 5-phospho-alpha-D-ribose 1-diphosphate: step 1/9. With respect to regulation, feedback inhibited by histidine. Its function is as follows. Catalyzes the condensation of ATP and 5-phosphoribose 1-diphosphate to form N'-(5'-phosphoribosyl)-ATP (PR-ATP). Has a crucial role in the pathway because the rate of histidine biosynthesis seems to be controlled primarily by regulation of HisG enzymatic activity. This is ATP phosphoribosyltransferase from Arthrobacter sp. (strain FB24).